A 193-amino-acid polypeptide reads, in one-letter code: Putative manganese efflux pump MntP (193 aa).

6 helical membrane passes run 3-23, 37-57, 66-86, 109-131, 146-166, and 171-191; these read PLSI…AAIG, VRAG…GWML, AAFD…HMIV, LALA…SLAF, CTLS…ALIG, and ILGG…HLSG.

This sequence belongs to the MntP (TC 9.B.29) family.

Its subcellular location is the cell inner membrane. Functionally, probably functions as a manganese efflux pump. This chain is Putative manganese efflux pump MntP, found in Xanthomonas campestris pv. campestris (strain 8004).